The following is a 111-amino-acid chain: Large ribosomal subunit protein uL22 (111 aa).

This sequence belongs to the universal ribosomal protein uL22 family. Part of the 50S ribosomal subunit.

In terms of biological role, this protein binds specifically to 23S rRNA; its binding is stimulated by other ribosomal proteins, e.g. L4, L17, and L20. It is important during the early stages of 50S assembly. It makes multiple contacts with different domains of the 23S rRNA in the assembled 50S subunit and ribosome. Functionally, the globular domain of the protein is located near the polypeptide exit tunnel on the outside of the subunit, while an extended beta-hairpin is found that lines the wall of the exit tunnel in the center of the 70S ribosome. This chain is Large ribosomal subunit protein uL22, found in Clostridioides difficile (strain 630) (Peptoclostridium difficile).